Consider the following 274-residue polypeptide: MTEPAIITNASDPAVQRIIDVTKHSRASIKTTLIEDTEPLMECIRAGVQFIEVYGSSGTPLDPALLDLCRQREIPVRLIDVSIVNQLFKAERKAKVFGIARVPRPARLADIAERGGDVVVLDGVKIVGNIGAIVRTSLALGAAGIVLVDSDLATIADRRLLRASRGYVFSLPVVLADREEAVSFLRDNDIALMVLDTDGDLGVKDLGDRADRMALVFGSEKGGPSGLFQEASAGTVSIPMLSSTESLNVSVSVGIALHERSARNFAVRRAAAQA.

S-adenosyl-L-methionine-binding positions include R165, L195, G218–E220, I238–M240, and L247–S252.

Belongs to the class IV-like SAM-binding methyltransferase superfamily. RNA methyltransferase TsnR/AvirB family. Homodimer.

The enzyme catalyses adenosine(1067) in 23S rRNA + S-adenosyl-L-methionine = 2'-O-methyladenosine(1067) in 23S rRNA + S-adenosyl-L-homocysteine + H(+). In terms of biological role, specifically methylates the adenosine-1067 in 23S ribosomal RNA. Confers resistance to antibiotic nosiheptide. This chain is 23S rRNA (adenosine(1067)-2'-O)-methyltransferase, found in Streptomyces actuosus.